Consider the following 354-residue polypeptide: Inactive ADP-ribosyltransferase ARH2 (354 aa).

Ser27 is modified (phosphoserine).

This sequence belongs to the ADP-ribosylglycohydrolase family.

It is found in the cytoplasm. Its subcellular location is the myofibril. The protein resides in the sarcomere. Functionally, required for myofibril assembly and outgrowth of the cardiac chambers in the developing heart. Appears to be catalytically inactive, showing no activity against O-acetyl-ADP-ribose. This Homo sapiens (Human) protein is Inactive ADP-ribosyltransferase ARH2 (ADPRHL1).